Consider the following 288-residue polypeptide: UTP--glucose-1-phosphate uridylyltransferase (288 aa).

This sequence belongs to the UDPGP type 2 family.

The enzyme catalyses alpha-D-glucose 1-phosphate + UTP + H(+) = UDP-alpha-D-glucose + diphosphate. The protein operates within glycolipid metabolism; diglucosyl-diacylglycerol biosynthesis. In terms of biological role, catalyzes the formation of UDP-glucose from glucose-1-phosphate and UTP. This is an intermediate step in the biosynthesis of diglucosyl-diacylglycerol (Glc2-DAG), i.e. the predominant glycolipid found in the S.aureus membrane, which is also used as a membrane anchor for lipoteichoic acid (LTA). This Staphylococcus aureus (strain bovine RF122 / ET3-1) protein is UTP--glucose-1-phosphate uridylyltransferase (gtaB).